Consider the following 386-residue polypeptide: MARKDTNKQYSLRKLKTGTASVAVAVAVLGAGFANQTEVKAAEIKKPQADSAWNWPKEYNALLKENEELKVEREKYLSYADDKEKDPQYRALMGENQDLRKREGQYQDKIEELEKERKEKQERQEQLERQYQIEADKHYQEQQKKHQQEQQQLEAEKQKLAKDKQISDASRQGLSRDLEASRAAKKELEAEHQKLKEEKQISDASRQGLSRDLEASREAKKKVEADLAALTAEHQKLKEDKQISDASRQGLSRDLEASREAKKKVEADLAEANSKLQALEKLNKELEEGKKLSEKEKAELQARLEAEAKALKEQLAKQAEELAKLKGNQTPNAKVAPQANRSRSAMTQQKRTLPSTGETANPFFTAAAATVMVSAGMLALKRKEEN.

Residues 1 to 41 form the signal peptide; sequence MARKDTNKQYSLRKLKTGTASVAVAVAVLGAGFANQTEVKA. Residues 42-152 form an igA-binding region; the sequence is AEIKKPQADS…QKKHQQEQQQ (111 aa). Basic and acidic residues-rich tracts occupy residues 79 to 88, 97 to 128, 134 to 166, 174 to 201, 209 to 221, 233 to 243, and 251 to 267; these read YADDKEKDPQ, QDLR…EQLE, EADK…DKQI, LSRD…EKQI, LSRD…EAKK, EHQKLKEDKQI, and LSRD…KVEA. Disordered stretches follow at residues 79-221 and 233-268; these read YADD…EAKK and EHQK…VEAD. C repeat units lie at residues 158 to 192, 193 to 227, and 235 to 269; these read QKLA…EAEH and QKLK…EADL. D repeat units lie at residues 302 to 307, 308 to 313, 316 to 321, and 323 to 328; these read ARLEAE, AKALKE, AKQAEE, and AKLKGN. The interval 323-360 is disordered; it reads AKLKGNQTPNAKVAPQANRSRSAMTQQKRTLPSTGETA. Positions 339 to 359 are enriched in polar residues; sequence ANRSRSAMTQQKRTLPSTGET. An LPXTG sorting signal motif is present at residues 353-357; sequence LPSTG. At Thr-356 the chain carries Pentaglycyl murein peptidoglycan amidated threonine. Positions 357-386 are cleaved as a propeptide — removed by sortase; that stretch reads GETANPFFTAAAATVMVSAGMLALKRKEEN.

This sequence belongs to the M protein family.

It localises to the secreted. The protein resides in the cell wall. Functionally, binds IgA of both subclasses, and also binds polyclonal IgG weakly. The chain is IgA receptor (arp4) from Streptococcus pyogenes.